The chain runs to 389 residues: Chalcone synthase 1 (389 aa).

Residue C164 is part of the active site.

The protein belongs to the thiolase-like superfamily. Chalcone/stilbene synthases family.

It carries out the reaction (E)-4-coumaroyl-CoA + 3 malonyl-CoA + 3 H(+) = 2',4,4',6'-tetrahydroxychalcone + 3 CO2 + 4 CoA. It functions in the pathway secondary metabolite biosynthesis; flavonoid biosynthesis. In terms of biological role, the primary product of this enzyme is 4,2',4',6'-tetrahydroxychalcone (also termed naringenin-chalcone or chalcone) which can under specific conditions spontaneously isomerize into naringenin. The protein is Chalcone synthase 1 (CHS1) of Medicago sativa (Alfalfa).